A 347-amino-acid polypeptide reads, in one-letter code: NADH-ubiquinone oxidoreductase chain 2 (347 aa).

11 helical membrane passes run 1–21, 25–45, 59–79, 96–116, 122–142, 145–165, 178–198, 200–220, 242–262, 274–294, and 325–345; these read MNPLIFIMLILTIILGTSIIL, HWFMIWLGFEMNMMAMIPVLM, YFLTQATASMILMLALIINLM, LLITIALTMKLGLAPFHFWVP, VSLQAGLILLTWQKIAPLAVM, IFASINPNLLLTMALLSIMIG, IMAYSSIAHMGWMTAIMIYNP, LMLLNLLLYILMTTSMFMMFM, VLMMTTLLSLGGLPPLTGFMP, NSVILPTSMAILALINLFFYM, and LLAPLITLSTLILPLTPMFIL.

Belongs to the complex I subunit 2 family. In terms of assembly, core subunit of respiratory chain NADH dehydrogenase (Complex I) which is composed of 45 different subunits. Interacts with TMEM242.

The protein localises to the mitochondrion inner membrane. It carries out the reaction a ubiquinone + NADH + 5 H(+)(in) = a ubiquinol + NAD(+) + 4 H(+)(out). Core subunit of the mitochondrial membrane respiratory chain NADH dehydrogenase (Complex I) which catalyzes electron transfer from NADH through the respiratory chain, using ubiquinone as an electron acceptor. Essential for the catalytic activity and assembly of complex I. The chain is NADH-ubiquinone oxidoreductase chain 2 from Myosorex kihaulei (Kihaule's mouse shrew).